We begin with the raw amino-acid sequence, 293 residues long: Probable mediator of RNA polymerase II transcription subunit 15b (293 aa).

Belongs to the plant Mediator complex subunit 15 family. Component of the Mediator complex.

The protein localises to the nucleus. Functionally, component of the Mediator complex, a coactivator involved in the regulated transcription of nearly all RNA polymerase II-dependent genes. Mediator functions as a bridge to convey information from gene-specific regulatory proteins to the basal RNA polymerase II transcription machinery. The Mediator complex, having a compact conformation in its free form, is recruited to promoters by direct interactions with regulatory proteins and serves for the assembly of a functional preinitiation complex with RNA polymerase II and the general transcription factors. This is Probable mediator of RNA polymerase II transcription subunit 15b (MED15B) from Arabidopsis thaliana (Mouse-ear cress).